A 579-amino-acid chain; its full sequence is Protein downstream neighbor of son homolog (579 aa).

Disordered stretches follow at residues 1–68 (MAEL…RRNP) and 331–379 (FSQP…DESF). Basic and acidic residues predominate over residues 339–348 (DTGKKQKKPE). The span at 365-378 (EADEASDESDEDES) shows a compositional bias: acidic residues.

This sequence belongs to the DONSON family. In terms of assembly, component of the replisome complex.

The protein resides in the nucleus. Functionally, replisome component that maintains genome stability by protecting stalled or damaged replication forks. After the induction of replication stress, required for the stabilization of stalled replication forks, the efficient activation of the intra-S-phase and G/2M cell-cycle checkpoints and the maintenance of genome stability. This chain is Protein downstream neighbor of son homolog, found in Xenopus laevis (African clawed frog).